A 138-amino-acid polypeptide reads, in one-letter code: uncharacterized protein (138 aa).

This is an uncharacterized protein from Saccharomyces cerevisiae (strain ATCC 204508 / S288c) (Baker's yeast).